The sequence spans 91 residues: Large ribosomal subunit protein eL34 (91 aa).

The protein belongs to the eukaryotic ribosomal protein eL34 family.

This Thermofilum pendens (strain DSM 2475 / Hrk 5) protein is Large ribosomal subunit protein eL34.